A 196-amino-acid chain; its full sequence is MKESIAKVYRKTGETEIKSEINLYGEGKYDIKTGIGFFDHMLNLMARHGLIDVKLEAKGDLQVDSHHTVEDVGIVLGESFKKALGDKKGIKRYGTSFVPMDEALASVSIDISGRPYIVCDFNFTVDKLGGMDTELVEEFLRALAFNVGITLHARVLYGKNNHHMIEAVFKALGRALREAVDRDEKINGVMSTKGTL.

It belongs to the imidazoleglycerol-phosphate dehydratase family.

It is found in the cytoplasm. It catalyses the reaction D-erythro-1-(imidazol-4-yl)glycerol 3-phosphate = 3-(imidazol-4-yl)-2-oxopropyl phosphate + H2O. Its pathway is amino-acid biosynthesis; L-histidine biosynthesis; L-histidine from 5-phospho-alpha-D-ribose 1-diphosphate: step 6/9. In Clostridium botulinum (strain Kyoto / Type A2), this protein is Imidazoleglycerol-phosphate dehydratase.